Consider the following 446-residue polypeptide: Chromosomal replication initiator protein DnaA (446 aa).

The domain I, interacts with DnaA modulators stretch occupies residues 1-92 (MENISDLWNS…SQAEEEIDLP (92 aa)). Positions 93 to 109 (PAKPNAAQDDSNHLPQS) are domain II. The tract at residues 110-326 (MLNPKYTFDT…GALIRVVAYS (217 aa)) is domain III, AAA+ region. Positions 154, 156, 157, and 158 each coordinate ATP. Residues 327–446 (SLINKDINAD…QVEEINDILK (120 aa)) form a domain IV, binds dsDNA region.

It belongs to the DnaA family. As to quaternary structure, oligomerizes as a right-handed, spiral filament on DNA at oriC.

The protein localises to the cytoplasm. Functionally, plays an essential role in the initiation and regulation of chromosomal replication. ATP-DnaA binds to the origin of replication (oriC) to initiate formation of the DNA replication initiation complex once per cell cycle. Binds the DnaA box (a 9 base pair repeat at the origin) and separates the double-stranded (ds)DNA. Forms a right-handed helical filament on oriC DNA; dsDNA binds to the exterior of the filament while single-stranded (ss)DNA is stabiized in the filament's interior. The ATP-DnaA-oriC complex binds and stabilizes one strand of the AT-rich DNA unwinding element (DUE), permitting loading of DNA polymerase. After initiation quickly degrades to an ADP-DnaA complex that is not apt for DNA replication. Binds acidic phospholipids. The protein is Chromosomal replication initiator protein DnaA of Bacillus anthracis (strain A0248).